The following is a 139-amino-acid chain: MLQPARTKYRKMHKGRMPGSAHRGSDMTYGEYGLMSLQPGWITSRQIEAARIAMTRHVKRGGKIWIRIFPDKPITKKPAETRMGTGKGGVEYYVAVVKPGRILYEMEGMTPEVATGALKLAQAKLPVLTKIVKRADLSL.

The interval 1-23 (MLQPARTKYRKMHKGRMPGSAHR) is disordered. Residues 7–16 (TKYRKMHKGR) are compositionally biased toward basic residues.

It belongs to the universal ribosomal protein uL16 family. As to quaternary structure, part of the 50S ribosomal subunit.

In terms of biological role, binds 23S rRNA and is also seen to make contacts with the A and possibly P site tRNAs. This Myxococcus xanthus (strain DK1622) protein is Large ribosomal subunit protein uL16.